Reading from the N-terminus, the 79-residue chain is Acyl carrier protein (79 aa).

The 76-residue stretch at 2–77 (SEIGERVKKI…DATKFLEKNA (76 aa)) folds into the Carrier domain. Residue Ser37 is modified to O-(pantetheine 4'-phosphoryl)serine.

It belongs to the acyl carrier protein (ACP) family. In terms of processing, 4'-phosphopantetheine is transferred from CoA to a specific serine of apo-ACP by AcpS. This modification is essential for activity because fatty acids are bound in thioester linkage to the sulfhydryl of the prosthetic group.

It is found in the cytoplasm. Its pathway is lipid metabolism; fatty acid biosynthesis. Its function is as follows. Carrier of the growing fatty acid chain in fatty acid biosynthesis. This Rhodopseudomonas palustris (strain HaA2) protein is Acyl carrier protein.